A 90-amino-acid polypeptide reads, in one-letter code: uncharacterized protein (90 aa).

This is an uncharacterized protein from Mycobacterium tuberculosis (strain ATCC 25618 / H37Rv).